A 347-amino-acid polypeptide reads, in one-letter code: GMP reductase (347 aa).

108–131 (ADFQKTKDIMALTEDLIFICIDIA) contributes to the NADP(+) binding site. Gly-181 and Gly-183 together coordinate K(+). Cys-186 serves as the catalytic Thioimidate intermediate. 216–239 (IIGDGGCSCAGDVSKAFGGGADFV) is a binding site for NADP(+).

The protein belongs to the IMPDH/GMPR family. GuaC type 1 subfamily. As to quaternary structure, homotetramer.

The catalysed reaction is IMP + NH4(+) + NADP(+) = GMP + NADPH + 2 H(+). Its function is as follows. Catalyzes the irreversible NADPH-dependent deamination of GMP to IMP. It functions in the conversion of nucleobase, nucleoside and nucleotide derivatives of G to A nucleotides, and in maintaining the intracellular balance of A and G nucleotides. The polypeptide is GMP reductase (Photobacterium profundum (strain SS9)).